The chain runs to 659 residues: MASAGKPALDDSRRGTGSPKMKARENAKDTLCRNVTIYGRCRYEDKGCAFNHDPLKVNSAYQFDSKKRFNVDSPSFTPSLLPSNGSSPTISSATMKKMATISPKAANAAPFQPRSVASRSNTSTPNSRQENINPDWTVAEVQEFVPQGFDVAHMTALQGNGNGTITPTNAFDPFVTASTPLSAGGAVGPVQPNPYSHDSAALGGAAFFPGSSGFQQPVQYHMYAPIGPHNQNTLGYQRNVHDLFLPNDFREELQKKAAATLQTLPNTQLPAQIDYFHSLVPLDLNHQKNATVFGFPSWVYKAQSSKDGNFYALRRLEGFRLTNEKAIRSVQAWKRVCNGSVVTIHDAFTSRSFQDSSLIFVTDYYPLSKTLAEQHLGTGQRFQGRHNVHIPEQVLWGYMTQIANALKAIHSNGLAARIIDASKILLTGKNRIRLNACAIMDVVQYDSQRTVADLQRQDLVNFGQLIVTLGANSPTVMHNPTKAMEHFTRAYSPQMKNSVFWLLNGLQKDQDRNIDIFITGISSQLMSTFDSALHLDDQLTSDLSRELENGRLVRLMTKLNLVNERPEYEHDRQWSENGERYFLKIFRDYVFHQVDAQGDAVVDLGHVLSCLNKLDAGSDEKITLVSRDEQSCFIVSYKELKKALESSFQALLKPARRMH.

Disordered regions lie at residues 1-26 (MASAGKPALDDSRRGTGSPKMKAREN) and 103-132 (PKAANAAPFQPRSVASRSNTSTPNSRQENI). The C3H1-type zinc-finger motif lies at 26-55 (NAKDTLCRNVTIYGRCRYEDKGCAFNHDPL). Residues 115–132 (SVASRSNTSTPNSRQENI) show a composition bias toward polar residues. The interval 262–522 (QTLPNTQLPA…NIDIFITGIS (261 aa)) is pseudokinase domain. ATP is bound by residues Arg314, 363–370 (DYYPLSKT), and 422–423 (SK). Residues 523–561 (SQLMSTFDSALHLDDQLTSDLSRELENGRLVRLMTKLNL) are a coiled coil. Residues 562–659 (VNERPEYEHD…ALLKPARRMH (98 aa)) form a knob domain region.

The protein belongs to the protein kinase superfamily. PAN3 family. As to quaternary structure, homodimer. Forms a heterotrimer with a catalytic subunit pan2 to form the poly(A)-nuclease (PAN) deadenylation complex. Interacts (via PAM-2 motif) with poly(A)-binding protein pab1 (via PABC domain), conferring substrate specificity of the enzyme complex.

Its subcellular location is the cytoplasm. Its function is as follows. Regulatory subunit of the poly(A)-nuclease (PAN) deadenylation complex, one of two cytoplasmic mRNA deadenylases involved in mRNA turnover. PAN specifically shortens poly(A) tails of RNA and the activity is stimulated by poly(A)-binding protein pab1. PAN deadenylation is followed by rapid degradation of the shortened mRNA tails by the CCR4-NOT complex. Deadenylated mRNAs are then degraded by two alternative mechanisms, namely exosome-mediated 3'-5' exonucleolytic degradation, or deadenylation-dependent mRNA decaping and subsequent 5'-3' exonucleolytic degradation by xrn1. May also be involved in post-transcriptional maturation of mRNA poly(A) tails. pan3 acts as a positive regulator for PAN activity, recruiting the catalytic subunit pan2 to mRNA via its interaction with RNA and with pab1. This chain is PAN2-PAN3 deadenylation complex subunit PAN3, found in Aspergillus clavatus (strain ATCC 1007 / CBS 513.65 / DSM 816 / NCTC 3887 / NRRL 1 / QM 1276 / 107).